We begin with the raw amino-acid sequence, 200 residues long: Endoribonuclease YbeY (200 aa).

Over residues 1–18 (MPADPALPDPVPPGPTAP) the composition is skewed to pro residues. A disordered region spans residues 1 to 22 (MPADPALPDPVPPGPTAPVPTD). Zn(2+) contacts are provided by His151, His155, and His161.

It belongs to the endoribonuclease YbeY family. It depends on Zn(2+) as a cofactor.

The protein localises to the cytoplasm. Functionally, single strand-specific metallo-endoribonuclease involved in late-stage 70S ribosome quality control and in maturation of the 3' terminus of the 16S rRNA. In Rhodospirillum rubrum (strain ATCC 11170 / ATH 1.1.1 / DSM 467 / LMG 4362 / NCIMB 8255 / S1), this protein is Endoribonuclease YbeY.